The chain runs to 365 residues: UPF0283 membrane protein Avi_2471 (365 aa).

The span at 1-10 shows a compositional bias: basic and acidic residues; it reads MSKAPEDQRP. Residues 1 to 47 are disordered; sequence MSKAPEDQRPMPRRPAAFSLEEPSSSPARPPFAEAQEPQRRAPKSFD. 2 helical membrane-spanning segments follow: residues 83-103 and 117-137; these read FGKL…GLWI and LGYT…VVVI.

The protein belongs to the UPF0283 family.

Its subcellular location is the cell inner membrane. The protein is UPF0283 membrane protein Avi_2471 of Allorhizobium ampelinum (strain ATCC BAA-846 / DSM 112012 / S4) (Agrobacterium vitis (strain S4)).